Consider the following 107-residue polypeptide: uncharacterized protein (107 aa).

Disordered stretches follow at residues 51-75 (VQRS…TQSA) and 88-107 (NPTP…APEP). Residues 63-75 (NGNQGSAIPTQSA) show a composition bias toward polar residues.

This is an uncharacterized protein from Fowl adenovirus A serotype 1 (strain CELO / Phelps) (FAdV-1).